A 241-amino-acid chain; its full sequence is Oil body-associated protein 1B (241 aa).

Residues 1–12 (MEKAVHSSTTSG) show a composition bias toward polar residues. Positions 1 to 22 (MEKAVHSSTTSGPAVPGETTKT) are disordered.

This sequence belongs to the OBAP family.

The chain is Oil body-associated protein 1B from Arabidopsis thaliana (Mouse-ear cress).